The following is a 717-amino-acid chain: Polyribonucleotide nucleotidyltransferase (717 aa).

Residues D486 and D492 each contribute to the Mg(2+) site. The 60-residue stretch at 553 to 612 (PRMITVKINPEKIRDVIGKGGSTIQALTKETGCTIDIQEDGTITIASTSSEGMAEAKRRI) folds into the KH domain. The S1 motif domain occupies 622 to 690 (GKIYSGTVLK…EKGRMRLSIK (69 aa)). The tract at residues 690–717 (KAAKAEEGDVPATAPQAPGAGDATSQQQ) is disordered.

It belongs to the polyribonucleotide nucleotidyltransferase family. Mg(2+) is required as a cofactor.

It localises to the cytoplasm. The enzyme catalyses RNA(n+1) + phosphate = RNA(n) + a ribonucleoside 5'-diphosphate. Functionally, involved in mRNA degradation. Catalyzes the phosphorolysis of single-stranded polyribonucleotides processively in the 3'- to 5'-direction. This Ralstonia nicotianae (strain ATCC BAA-1114 / GMI1000) (Ralstonia solanacearum) protein is Polyribonucleotide nucleotidyltransferase.